A 209-amino-acid chain; its full sequence is Large ribosomal subunit protein bL21m (209 aa).

The N-terminal 43 residues, 1–43 (MAAAIAASALPGAFGRLVSVCSRSILASQGSGSASLWSASRRF), are a transit peptide targeting the mitochondrion.

The protein belongs to the bacterial ribosomal protein bL21 family. In terms of assembly, component of the mitochondrial ribosome large subunit (39S) which comprises a 16S rRNA and about 50 distinct proteins.

The protein localises to the mitochondrion. This chain is Large ribosomal subunit protein bL21m (Mrpl21), found in Mus musculus (Mouse).